Consider the following 456-residue polypeptide: Exodeoxyribonuclease 7 large subunit (456 aa).

It belongs to the XseA family. Heterooligomer composed of large and small subunits.

The protein resides in the cytoplasm. It carries out the reaction Exonucleolytic cleavage in either 5'- to 3'- or 3'- to 5'-direction to yield nucleoside 5'-phosphates.. Its function is as follows. Bidirectionally degrades single-stranded DNA into large acid-insoluble oligonucleotides, which are then degraded further into small acid-soluble oligonucleotides. This Lactobacillus gasseri (strain ATCC 33323 / DSM 20243 / BCRC 14619 / CIP 102991 / JCM 1131 / KCTC 3163 / NCIMB 11718 / NCTC 13722 / AM63) protein is Exodeoxyribonuclease 7 large subunit.